Reading from the N-terminus, the 474-residue chain is tRNA-2-methylthio-N(6)-dimethylallyladenosine synthase (474 aa).

The region spanning 3-120 (QKLHIKTWGC…LPEMINQIRG (118 aa)) is the MTTase N-terminal domain. [4Fe-4S] cluster is bound by residues C12, C49, C83, C157, C161, and C164. In terms of domain architecture, Radical SAM core spans 143-375 (RAEGPTAFVS…QQRINNQAAQ (233 aa)). Residues 378–441 (RAMLGTEQRV…TNSLRGEVVR (64 aa)) form the TRAM domain.

Belongs to the methylthiotransferase family. MiaB subfamily. Monomer. It depends on [4Fe-4S] cluster as a cofactor.

The protein localises to the cytoplasm. The catalysed reaction is N(6)-dimethylallyladenosine(37) in tRNA + (sulfur carrier)-SH + AH2 + 2 S-adenosyl-L-methionine = 2-methylsulfanyl-N(6)-dimethylallyladenosine(37) in tRNA + (sulfur carrier)-H + 5'-deoxyadenosine + L-methionine + A + S-adenosyl-L-homocysteine + 2 H(+). Catalyzes the methylthiolation of N6-(dimethylallyl)adenosine (i(6)A), leading to the formation of 2-methylthio-N6-(dimethylallyl)adenosine (ms(2)i(6)A) at position 37 in tRNAs that read codons beginning with uridine. The protein is tRNA-2-methylthio-N(6)-dimethylallyladenosine synthase of Histophilus somni (strain 129Pt) (Haemophilus somnus).